The sequence spans 303 residues: MQKFDTRTFQGLILTLQDYWARQGCTIVQPLDMEVGAGTSHPMTCLRALGPEPMATAYVQPSRRPTDGRYGENPNRLQHYYQFQVVIKPSPDNIQELYLGSLKELGMDPTIHDIRFVEDNWENPTLGAWGLGWEVWLNGMEVTQFTYFQQVGGLECKPVTGEITYGLERLAMYIQGVDSVYDLVWSDGPLGKTTYGDVFHQNEVEQSTYNFEYADVDFLFSCFEQYEKEAQQLLALETPLPLPAYERILKAAHSFNLLDARKAISVTERQRYILRIRTLTKAVAEAYYASREALGFPMCNKNK.

This sequence belongs to the class-II aminoacyl-tRNA synthetase family. In terms of assembly, tetramer of two alpha and two beta subunits.

It is found in the cytoplasm. It catalyses the reaction tRNA(Gly) + glycine + ATP = glycyl-tRNA(Gly) + AMP + diphosphate. The chain is Glycine--tRNA ligase alpha subunit from Klebsiella pneumoniae (strain 342).